The following is a 711-amino-acid chain: Polyribonucleotide nucleotidyltransferase (711 aa).

Residues D489 and D495 each contribute to the Mg(2+) site. The KH domain occupies 556 to 615 (PRIHTIKISPDKIKDVIGKGGSVIRALTEETGTTIEIEDDGTVKIAATDGEKAKHAIRRI). An S1 motif domain is found at 625–693 (GRIYNGKVTR…RQGRVRLSIK (69 aa)).

The protein belongs to the polyribonucleotide nucleotidyltransferase family. In terms of assembly, component of the RNA degradosome, which is a multiprotein complex involved in RNA processing and mRNA degradation. Mg(2+) serves as cofactor.

The protein localises to the cytoplasm. The catalysed reaction is RNA(n+1) + phosphate = RNA(n) + a ribonucleoside 5'-diphosphate. Involved in mRNA degradation. Catalyzes the phosphorolysis of single-stranded polyribonucleotides processively in the 3'- to 5'-direction. In Cronobacter sakazakii (strain ATCC BAA-894) (Enterobacter sakazakii), this protein is Polyribonucleotide nucleotidyltransferase.